The chain runs to 222 residues: Deoxyribose-phosphate aldolase (222 aa).

Asp91 serves as the catalytic Proton donor/acceptor. Lys153 (schiff-base intermediate with acetaldehyde) is an active-site residue. Lys182 acts as the Proton donor/acceptor in catalysis.

This sequence belongs to the DeoC/FbaB aldolase family. DeoC type 1 subfamily.

The protein resides in the cytoplasm. The enzyme catalyses 2-deoxy-D-ribose 5-phosphate = D-glyceraldehyde 3-phosphate + acetaldehyde. Its pathway is carbohydrate degradation; 2-deoxy-D-ribose 1-phosphate degradation; D-glyceraldehyde 3-phosphate and acetaldehyde from 2-deoxy-alpha-D-ribose 1-phosphate: step 2/2. Functionally, catalyzes a reversible aldol reaction between acetaldehyde and D-glyceraldehyde 3-phosphate to generate 2-deoxy-D-ribose 5-phosphate. This Mycoplasma capricolum subsp. capricolum (strain California kid / ATCC 27343 / NCTC 10154) protein is Deoxyribose-phosphate aldolase.